Consider the following 1437-residue polypeptide: Protein SUPPRESSOR OF npr1-1, CONSTITUTIVE 1 (1437 aa).

N-acetylmethionine is present on M1. The TIR domain occupies 19 to 182 (RRYDVFPSFR…ELAEDVLRKT (164 aa)). Residue 28 to 33 (RGEDVR) participates in NAD(+) binding. Residue E93 is part of the active site. LRR repeat units lie at residues 554-576 (MRNL…VYLP), 577-598 (LKLR…TFKA), 600-621 (YLVN…TLPL), 622-645 (GSLK…SLAI), 647-668 (LEEL…IQNA), 670-691 (KLIY…DLNL), 692-715 (ESLE…KMGC), 781-805 (LGSL…SKAT), 807-828 (LESL…IGNL), 829-851 (HRLV…DVNL), 852-875 (SSLE…STNI), 877-895 (WLYL…IGNL), 897-918 (RLVR…DVNL), 919-939 (SSLE…PLIS), 940-962 (ESIK…SKAT), 964-985 (LKNL…IGNL), 1009-1029 (SSLM…PLIS), 1030-1052 (TNIV…IGNL), 1054-1075 (RLVK…DVNL), 1076-1096 (SSLM…PLIS), 1097-1121 (TRIE…DFTR), 1123-1143 (TVLM…IFRL), and 1161-1185 (LSDA…NIEY).

The protein belongs to the disease resistance TIR-NB-LRR family. In terms of assembly, homodimer. Interacts (via TIR domain) with TPR1. Interacts with EDS1. Interacts with SRFR1. Interacts with HSP90-3. Binds to MORC1/CRT1. Interacts with TRAF1B. In terms of processing, met-1 is specifically acetylated by N-terminal acetyltransferase complex A (NatA). The NatA-mediated acetylation serves as a degradation signal. Post-translationally, met-1 is specifically acetylated by N-terminal acetyltransferase complex B (NatB). The NatB-mediated acetylation stabilizes SNC1. As to expression, expressed in guard cells and epidermal cells, but not detected in mesophyll cells.

Its subcellular location is the cytoplasm. It localises to the microsome. The protein resides in the nucleus. It carries out the reaction NAD(+) + H2O = ADP-D-ribose + nicotinamide + H(+). In terms of biological role, disease resistance protein of the TIR-NB-LRR-type. Part of the RPP5 locus that contains a cluster of several paralogous disease resistance (R) genes. Resistance proteins guard the plant against pathogens that contain an appropriate avirulence protein via an indirect interaction with this avirulence protein. That triggers a defense system including the hypersensitive response, which restricts the pathogen growth. Probably acts as a NAD(+) hydrolase (NADase): in response to activation, catalyzes cleavage of NAD(+) into ADP-D-ribose (ADPR) and nicotinamide; NAD(+) cleavage triggering a defense system that promotes cell death. Expression regulated by MOS1 at chromatin level. Nuclear localization of SNC1 is essential for its activity. ABA deficiency can rescue high-temperature inhibition of SNC1-mediated defense responses. The polypeptide is Protein SUPPRESSOR OF npr1-1, CONSTITUTIVE 1 (Arabidopsis thaliana (Mouse-ear cress)).